We begin with the raw amino-acid sequence, 424 residues long: Dual-specificity RNA methyltransferase RlmN (424 aa).

Catalysis depends on Glu-132, which acts as the Proton acceptor. In terms of domain architecture, Radical SAM core spans 138–388 (GPDRGTLCVS…VRTPRGRDIL (251 aa)). A disulfide bridge links Cys-145 with Cys-391. Cys-152, Cys-156, and Cys-159 together coordinate [4Fe-4S] cluster. S-adenosyl-L-methionine contacts are provided by residues 217 to 218 (GE), Ser-249, 271 to 273 (SLH), and Asn-348. The active-site S-methylcysteine intermediate is the Cys-391.

This sequence belongs to the radical SAM superfamily. RlmN family. Requires [4Fe-4S] cluster as cofactor.

Its subcellular location is the cytoplasm. It catalyses the reaction adenosine(2503) in 23S rRNA + 2 reduced [2Fe-2S]-[ferredoxin] + 2 S-adenosyl-L-methionine = 2-methyladenosine(2503) in 23S rRNA + 5'-deoxyadenosine + L-methionine + 2 oxidized [2Fe-2S]-[ferredoxin] + S-adenosyl-L-homocysteine. The catalysed reaction is adenosine(37) in tRNA + 2 reduced [2Fe-2S]-[ferredoxin] + 2 S-adenosyl-L-methionine = 2-methyladenosine(37) in tRNA + 5'-deoxyadenosine + L-methionine + 2 oxidized [2Fe-2S]-[ferredoxin] + S-adenosyl-L-homocysteine. Its function is as follows. Specifically methylates position 2 of adenine 2503 in 23S rRNA and position 2 of adenine 37 in tRNAs. m2A2503 modification seems to play a crucial role in the proofreading step occurring at the peptidyl transferase center and thus would serve to optimize ribosomal fidelity. The polypeptide is Dual-specificity RNA methyltransferase RlmN (Methylobacterium radiotolerans (strain ATCC 27329 / DSM 1819 / JCM 2831 / NBRC 15690 / NCIMB 10815 / 0-1)).